Reading from the N-terminus, the 377-residue chain is uncharacterized protein (377 aa).

A disordered region spans residues 345 to 377 (VGPSPPAYEQVARSSPTDIPLPPPSCPTNVQRD).

This is an uncharacterized protein from Schizosaccharomyces pombe (strain 972 / ATCC 24843) (Fission yeast).